The sequence spans 329 residues: Acrosin (329 aa).

A signal peptide spans 1 to 17 (MLPTAVLLVLAVSVVAR). N-linked (GlcNAc...) asparagine glycosylation is present at Asn-19. 6 cysteine pairs are disulfide-bonded: Cys-22/Cys-152, Cys-26/Cys-160, Cys-71/Cys-87, Cys-175/Cys-244, Cys-207/Cys-223, and Cys-234/Cys-264. Residues 40–288 (IIGGQDAAHG…YLNWIASKIG (249 aa)) enclose the Peptidase S1 domain. Residues His-86 and Asp-140 each act as charge relay system in the active site. Asn-208 carries N-linked (GlcNAc...) asparagine glycosylation. Ser-238 functions as the Charge relay system in the catalytic mechanism.

The protein belongs to the peptidase S1 family. In terms of assembly, heavy chain (catalytic) and a light chain linked by two disulfide bonds. Forms a heterodimer with SERPINA5.

The catalysed reaction is Preferential cleavage: Arg-|-Xaa, Lys-|-Xaa.. Its activity is regulated as follows. Inhibited by SERPINA5. In terms of biological role, acrosin is the major protease of mammalian spermatozoa. It is a serine protease of trypsin-like cleavage specificity, it is synthesized in a zymogen form, proacrosin and stored in the acrosome. The sequence is that of Acrosin (ACR) from Ovis aries (Sheep).